The primary structure comprises 318 residues: Transcription factor MYBS3 (318 aa).

2 disordered regions span residues 1–20 and 50–98; these read MTRR…TCPN and AAGS…PWTE. Residues 3–20 form a CCHC-type zinc finger; sequence RRCSHCSHNGHNSRTCPN. Polar residues predominate over residues 8-18; it reads CSHNGHNSRTC. The span at 50–77 shows a compositional bias: low complexity; it reads AAGSTSGGASPADGPDAAPTAADGYASD. The HTH myb-type domain occupies 88-144; the sequence is RDRKKGVPWTEEEHRRFLLGLQKLGKGDWRGISRNFVVSRTPTQVASHAQKYFIRQS. The H-T-H motif DNA-binding region spans 116–140; sequence WRGISRNFVVSRTPTQVASHAQKYF. A disordered region spans residues 159–200; the sequence is VPDESMDLPPLPGGQEPETQVLNQPALPPPREEEEVDSMESD.

In terms of tissue distribution, expressed in all tissues, with the highest level in senescent leaves.

Its subcellular location is the nucleus. Functionally, transcription repressor that binds to 5'-TATCCA-3' elements in gene promoters. Contributes to the sugar-repressed transcription of promoters containing SRS or 5'-TATCCA-3' elements. Transcription repressor involved in a cold stress response pathway that confers cold tolerance. Suppresses the DREB1-dependent signaling pathway under prolonged cold stress. DREB1 responds quickly and transiently while MYBS3 responds slowly to cold stress. They may act sequentially and complementarily for adaptation to short- and long-term cold stress. The polypeptide is Transcription factor MYBS3 (Oryza sativa subsp. japonica (Rice)).